A 51-amino-acid polypeptide reads, in one-letter code: Insulin-2 (51 aa).

3 cysteine pairs are disulfide-bonded: Cys8–Cys37, Cys20–Cys50, and Cys36–Cys41.

Belongs to the insulin family. Heterodimer of a B chain and an A chain linked by two disulfide bonds.

The protein localises to the secreted. Functionally, insulin decreases blood glucose concentration. It increases cell permeability to monosaccharides, amino acids and fatty acids. It accelerates glycolysis, the pentose phosphate cycle, and glycogen synthesis in liver. In Katsuwonus pelamis (Skipjack tuna), this protein is Insulin-2.